Here is a 146-residue protein sequence, read N- to C-terminus: Large ribosomal subunit protein uL15 (146 aa).

Over residues M1 to R18 the composition is skewed to basic and acidic residues. The interval M1–Q54 is disordered. Residues S42–G52 are compositionally biased toward gly residues.

Belongs to the universal ribosomal protein uL15 family. As to quaternary structure, part of the 50S ribosomal subunit.

Its function is as follows. Binds to the 23S rRNA. The sequence is that of Large ribosomal subunit protein uL15 from Staphylococcus aureus (strain Mu3 / ATCC 700698).